We begin with the raw amino-acid sequence, 2430 residues long: DNA-directed RNA polymerase subunit beta'' (2430 aa).

Residues cysteine 336, cysteine 455, cysteine 462, and cysteine 465 each coordinate Zn(2+).

The protein belongs to the RNA polymerase beta' chain family. RpoC2 subfamily. In terms of assembly, in plastids the minimal PEP RNA polymerase catalytic core is composed of four subunits: alpha, beta, beta', and beta''. When a (nuclear-encoded) sigma factor is associated with the core the holoenzyme is formed, which can initiate transcription. Zn(2+) serves as cofactor.

The protein localises to the plastid. Its subcellular location is the chloroplast. The enzyme catalyses RNA(n) + a ribonucleoside 5'-triphosphate = RNA(n+1) + diphosphate. Its function is as follows. DNA-dependent RNA polymerase catalyzes the transcription of DNA into RNA using the four ribonucleoside triphosphates as substrates. The sequence is that of DNA-directed RNA polymerase subunit beta'' from Stigeoclonium helveticum (Green alga).